The chain runs to 392 residues: Meiotically up-regulated gene 11 protein (392 aa).

The protein localises to the cytoplasm. It is found in the nucleus. Functionally, has a role in meiosis. This is Meiotically up-regulated gene 11 protein (mug11) from Schizosaccharomyces pombe (strain 972 / ATCC 24843) (Fission yeast).